The sequence spans 841 residues: Outer membrane usher protein MyfC (841 aa).

Positions 1-26 (MFFSLKNSVAKLIAFWAICLVLPVWA) are cleaved as a signal peptide. An intrachain disulfide couples Cys-817 to Cys-840.

The protein belongs to the fimbrial export usher family.

It is found in the cell outer membrane. Its function is as follows. Involved in the export and assembly of the MyfA fimbrial subunit. The protein is Outer membrane usher protein MyfC (myfC) of Yersinia enterocolitica.